A 787-amino-acid chain; its full sequence is Signal transducer and activator of transcription 5B (787 aa).

Tyr-90 carries the phosphotyrosine modification. Ser-128 is subject to Phosphoserine. The 98-residue stretch at 589-686 (WNDGAILGFV…EVYSKYYTPV (98 aa)) folds into the SH2 domain. Tyr-682 carries the post-translational modification Phosphotyrosine. Phosphotyrosine; by HCK, JAK and PTK6 is present on Tyr-699.

This sequence belongs to the transcription factor STAT family. In terms of assembly, upon activation, forms a homodimer or a heterodimer with a related family member. Binds NR3C1. Interacts with NCOA1. Interacts with NMI. Interacts with SOCS7. Interacts (via SH2 domain) with INSR. Interacts with CPEB3; this inhibits STAT5B-mediated transcriptional activation. Post-translationally, tyrosine phosphorylated in response to signaling via activated KIT, resulting in translocation to the nucleus. Tyrosine phosphorylated in response to signaling via activated FLT3; wild-type FLT3 results in much weaker phosphorylation than constitutively activated mutant FLT3. Alternatively, can be phosphorylated by JAK2. Phosphorylation at Tyr-699 by PTK6 or HCK leads to an increase of its transcriptional activity.

The protein localises to the cytoplasm. It localises to the nucleus. Its function is as follows. Carries out a dual function: signal transduction and activation of transcription. Mediates cellular responses to the cytokine KITLG/SCF and other growth factors. Binds to the GAS element and activates PRL-induced transcription. Positively regulates hematopoietic/erythroid differentiation. The chain is Signal transducer and activator of transcription 5B (STAT5B) from Sus scrofa (Pig).